The following is a 222-amino-acid chain: RING finger protein 141 (222 aa).

The RING-type zinc-finger motif lies at 147–184 (CCICMDGKADLILPCAHSFCQKCIDKWSGQSRNCPVCR).

This chain is RING finger protein 141 (rnf141), found in Danio rerio (Zebrafish).